A 145-amino-acid polypeptide reads, in one-letter code: Secreted RxLR effector protein PSE1 (145 aa).

Positions 1-21 (MRLSSFIVVGAAVVNLLTSGS) are cleaved as a signal peptide. The short motif at 53 to 73 (RLLRYHSNNNRGGDEDIAEER) is the RxLR-dEER element.

This sequence belongs to the RxLR effector family.

It localises to the secreted. It is found in the host cell. In terms of biological role, secreted effector that impairs both plant effector-triggered immunity and pathogen-associated molecular patterns (PAMP)-triggered immunity (PTI). Suppresses plant cell death as a part of the plant defense responses. Facilitates plant infection by altering the auxin content at the roots penetration points of the of the pathogen. The chain is Secreted RxLR effector protein PSE1 from Phytophthora nicotianae (Potato buckeye rot agent).